Here is a 474-residue protein sequence, read N- to C-terminus: Ribosomal RNA small subunit methyltransferase F (474 aa).

Residues 121–127 (ASAPGSK), glutamate 145, aspartate 172, and aspartate 190 each bind S-adenosyl-L-methionine. Catalysis depends on cysteine 243, which acts as the Nucleophile.

This sequence belongs to the class I-like SAM-binding methyltransferase superfamily. RsmB/NOP family.

It is found in the cytoplasm. It carries out the reaction cytidine(1407) in 16S rRNA + S-adenosyl-L-methionine = 5-methylcytidine(1407) in 16S rRNA + S-adenosyl-L-homocysteine + H(+). Specifically methylates the cytosine at position 1407 (m5C1407) of 16S rRNA. This Shewanella piezotolerans (strain WP3 / JCM 13877) protein is Ribosomal RNA small subunit methyltransferase F.